Here is a 503-residue protein sequence, read N- to C-terminus: Cysteine--tRNA ligase (503 aa).

C31 provides a ligand contact to Zn(2+). Residues 33–43 (PTVYDYAHIGN) carry the 'HIGH' region motif. Zn(2+) contacts are provided by C225, H264, and E268. The 'KMSKS' region motif lies at 297 to 301 (KMSKS). K300 provides a ligand contact to ATP.

The protein belongs to the class-I aminoacyl-tRNA synthetase family. Monomer. Zn(2+) is required as a cofactor.

The protein resides in the cytoplasm. The enzyme catalyses tRNA(Cys) + L-cysteine + ATP = L-cysteinyl-tRNA(Cys) + AMP + diphosphate. The chain is Cysteine--tRNA ligase from Bartonella tribocorum (strain CIP 105476 / IBS 506).